Consider the following 241-residue polypeptide: Small ribosomal subunit protein eS4 (241 aa).

The 63-residue stretch at Ile43–Asp105 folds into the S4 RNA-binding domain.

Belongs to the eukaryotic ribosomal protein eS4 family.

The polypeptide is Small ribosomal subunit protein eS4 (Methanosphaera stadtmanae (strain ATCC 43021 / DSM 3091 / JCM 11832 / MCB-3)).